The sequence spans 70 residues: Translation initiation factor IF-1 (70 aa).

One can recognise an S1-like domain in the interval 1–70 (MKNDKLFLTG…LKLGRITQRK (70 aa)).

Belongs to the IF-1 family. Component of the 30S ribosomal translation pre-initiation complex which assembles on the 30S ribosome in the order IF-2 and IF-3, IF-1 and N-formylmethionyl-tRNA(fMet); mRNA recruitment can occur at any time during PIC assembly.

The protein resides in the cytoplasm. Its function is as follows. One of the essential components for the initiation of protein synthesis. Stabilizes the binding of IF-2 and IF-3 on the 30S subunit to which N-formylmethionyl-tRNA(fMet) subsequently binds. Helps modulate mRNA selection, yielding the 30S pre-initiation complex (PIC). Upon addition of the 50S ribosomal subunit IF-1, IF-2 and IF-3 are released leaving the mature 70S translation initiation complex. This is Translation initiation factor IF-1 from Mycoplasma genitalium (strain ATCC 33530 / DSM 19775 / NCTC 10195 / G37) (Mycoplasmoides genitalium).